The primary structure comprises 359 residues: UDP-N-acetylglucosamine--N-acetylmuramyl-(pentapeptide) pyrophosphoryl-undecaprenol N-acetylglucosamine transferase (359 aa).

UDP-N-acetyl-alpha-D-glucosamine-binding positions include 13-15 (TAG), Asn-125, Arg-161, Ser-193, Ile-241, and Gln-285.

This sequence belongs to the glycosyltransferase 28 family. MurG subfamily.

It is found in the cell membrane. The enzyme catalyses di-trans,octa-cis-undecaprenyl diphospho-N-acetyl-alpha-D-muramoyl-L-alanyl-D-glutamyl-meso-2,6-diaminopimeloyl-D-alanyl-D-alanine + UDP-N-acetyl-alpha-D-glucosamine = di-trans,octa-cis-undecaprenyl diphospho-[N-acetyl-alpha-D-glucosaminyl-(1-&gt;4)]-N-acetyl-alpha-D-muramoyl-L-alanyl-D-glutamyl-meso-2,6-diaminopimeloyl-D-alanyl-D-alanine + UDP + H(+). It participates in cell wall biogenesis; peptidoglycan biosynthesis. Its function is as follows. Cell wall formation. Catalyzes the transfer of a GlcNAc subunit on undecaprenyl-pyrophosphoryl-MurNAc-pentapeptide (lipid intermediate I) to form undecaprenyl-pyrophosphoryl-MurNAc-(pentapeptide)GlcNAc (lipid intermediate II). This is UDP-N-acetylglucosamine--N-acetylmuramyl-(pentapeptide) pyrophosphoryl-undecaprenol N-acetylglucosamine transferase from Corynebacterium diphtheriae (strain ATCC 700971 / NCTC 13129 / Biotype gravis).